Here is a 359-residue protein sequence, read N- to C-terminus: 3-dehydroquinate synthase (359 aa).

NAD(+)-binding positions include 71-76, 105-109, 129-130, lysine 142, and lysine 151; these read DGEAYK, GVIGD, and TT. Residues glutamate 184, histidine 247, and histidine 264 each contribute to the Zn(2+) site.

Belongs to the sugar phosphate cyclases superfamily. Dehydroquinate synthase family. It depends on Co(2+) as a cofactor. Requires Zn(2+) as cofactor. The cofactor is NAD(+).

The protein resides in the cytoplasm. The enzyme catalyses 7-phospho-2-dehydro-3-deoxy-D-arabino-heptonate = 3-dehydroquinate + phosphate. Its pathway is metabolic intermediate biosynthesis; chorismate biosynthesis; chorismate from D-erythrose 4-phosphate and phosphoenolpyruvate: step 2/7. Its function is as follows. Catalyzes the conversion of 3-deoxy-D-arabino-heptulosonate 7-phosphate (DAHP) to dehydroquinate (DHQ). The sequence is that of 3-dehydroquinate synthase from Burkholderia multivorans (strain ATCC 17616 / 249).